The following is a 413-amino-acid chain: Tyrosine--tRNA ligase (413 aa).

Y33 contributes to the L-tyrosine binding site. The short motif at 38–47 is the 'HIGH' region element; that stretch reads PTADSLHVGH. Positions 162 and 166 each coordinate L-tyrosine. Residues 225–229 carry the 'KMSKS' region motif; it reads KFGKT. K228 is an ATP binding site. The 68-residue stretch at 346-413 folds into the S4 RNA-binding domain; that stretch reads TSAIDAIVNV…KKKYYLLEIK (68 aa).

Belongs to the class-I aminoacyl-tRNA synthetase family. TyrS type 1 subfamily. In terms of assembly, homodimer.

Its subcellular location is the cytoplasm. The enzyme catalyses tRNA(Tyr) + L-tyrosine + ATP = L-tyrosyl-tRNA(Tyr) + AMP + diphosphate + H(+). Catalyzes the attachment of tyrosine to tRNA(Tyr) in a two-step reaction: tyrosine is first activated by ATP to form Tyr-AMP and then transferred to the acceptor end of tRNA(Tyr). This chain is Tyrosine--tRNA ligase, found in Mesoplasma florum (strain ATCC 33453 / NBRC 100688 / NCTC 11704 / L1) (Acholeplasma florum).